Here is a 297-residue protein sequence, read N- to C-terminus: MTGLYELVWRVLHALLCLHLTLTSWLRVRFGTWNWIWRRCCRAASAAVLAPLGFTLRKPRAVGRNRRHHRHPHGGPGPGPGPAATHPRLRWRADVRSLQKLPVHMGLLVTEEVQEPSFSDIASLVVWCMAVGISYISVYDHQGIFKRNNSRLMDEILKQQQELLGQDCSKYSAEFANSNDKDDQDLNCPSAVKVLSPEDGKADIVRAAQDFCQLVAQQQRKPTDLDVDLLGSLLSSHGFPDPDLVLKFGPVDSTLGFLPWQIRLTEIVSLPSHLNISYEDFFSALRQYAACEQRLGK.

A run of 2 helical transmembrane segments spans residues 7 to 26 and 40 to 56; these read LVWRVLHALLCLHLTLTSWL and CCRAASAAVLAPLGFTL. Positions 63 to 73 are enriched in basic residues; that stretch reads GRNRRHHRHPH. The interval 63–86 is disordered; sequence GRNRRHHRHPHGGPGPGPGPAATH. A helical transmembrane segment spans residues 121 to 139; it reads IASLVVWCMAVGISYISVY. N-linked (GlcNAc...) asparagine glycosylation is found at Asn-148 and Asn-275. An RXG motif; crucial for prenyltransferase activity motif is present at residues 294–296; that stretch reads RLG. The isopentenyl diphosphate site is built by Leu-295 and Gly-296.

The protein belongs to the UPP synthase family. The active dehydrodolichyl diphosphate synthase complex is a heterotetramer composed of a dimer of heterodimer of DHDDS and NUS1. Interacts with NPC2. Mg(2+) serves as cofactor. As to expression, highly expressed in heart, liver, kidney and pancreas.

The protein localises to the endoplasmic reticulum membrane. The catalysed reaction is n isopentenyl diphosphate + (2E,6E)-farnesyl diphosphate = a di-trans,poly-cis-polyprenyl diphosphate + n diphosphate. Its pathway is protein modification; protein glycosylation. It participates in lipid metabolism. Functionally, with DHDDS, forms the dehydrodolichyl diphosphate synthase (DDS) complex, an essential component of the dolichol monophosphate (Dol-P) biosynthetic machinery. Both subunits contribute to enzymatic activity, i.e. condensation of multiple copies of isopentenyl pyrophosphate (IPP) to farnesyl pyrophosphate (FPP) to produce dehydrodolichyl diphosphate (Dedol-PP), a precursor of dolichol phosphate which is utilized as a sugar carrier in protein glycosylation in the endoplasmic reticulum (ER). Synthesizes long-chain polyprenols, mostly of C95 and C100 chain length. Regulates the glycosylation and stability of nascent NPC2, thereby promoting trafficking of LDL-derived cholesterol. Acts as a specific receptor for the N-terminus of Nogo-B, a neural and cardiovascular regulator. In Mus musculus (Mouse), this protein is Dehydrodolichyl diphosphate synthase complex subunit Nus1.